The primary structure comprises 589 residues: Kelch-like protein 25 (589 aa).

The BTB domain maps to 46–114 (TDVTLWAGDR…AYSSRIVINE (69 aa)). The BACK domain occupies 149 to 250 (CLGMMVLSDA…LPSDCLKNAV (102 aa)). Kelch repeat units follow at residues 296-340 (TLLI…AIGC), 341-388 (KVYV…ELEN), 389-444 (CLYV…SAKL), 446-492 (LFVF…VLGS), 493-538 (QIFI…ASGN), and 539-585 (KLYV…STWK).

In terms of assembly, component of the BCR(KLHL25) E3 ubiquitin ligase complex, at least composed of CUL3, KLHL25 and RBX1.

Its pathway is protein modification; protein ubiquitination. Functionally, substrate-specific adapter of a BCR (BTB-CUL3-RBX1) E3 ubiquitin ligase complex involved in various processes, such as translation homeostasis and lipid synthesis. The BCR(KLHL25) ubiquitin ligase complex acts by mediating ubiquitination of hypophosphorylated EIF4EBP1 (4E-BP1): ubiquitination and subsequent degradation of hypophosphorylated EIF4EBP1 (4E-BP1) probably serves as a homeostatic mechanism to maintain translation and prevent eIF4E inhibition when eIF4E levels are low. The BCR(KLHL25) complex does not target EIF4EBP1 (4E-BP1) when it is hyperphosphorylated or associated with eIF4E. The BCR(KLHL25) complex also acts as a regulator of lipid synthesis by mediating ubiquitination and degradation of ACLY, thereby inhibiting lipid synthesis. BCR(KLHL25)-mediated degradation of ACLY promotes fatty acid oxidation and is required for differentiation of inducible regulatory T (iTreg) cells. The chain is Kelch-like protein 25 from Mus musculus (Mouse).